The primary structure comprises 471 residues: Secretogranin-3 (471 aa).

Residues 1-22 form the signal peptide; it reads MGFLWTGSWILVLVLNSGPIQA. Disordered stretches follow at residues 24 to 45, 89 to 108, and 345 to 404; these read PKPEGSQDKSLHNRELSAERPL, TVEKERQSIRSPPFDNQLNV, and KLEK…TDEA. Over residues 28-45 the composition is skewed to basic and acidic residues; that stretch reads GSQDKSLHNRELSAERPL. Serine 40 is modified (phosphoserine). O-linked (Xyl...) (chondroitin sulfate) serine glycosylation is present at serine 40. 2 stretches are compositionally biased toward basic and acidic residues: residues 345-355 and 364-404; these read KLEKNTTDSKS and KSQE…TDEA. Phosphoserine is present on serine 365.

Interacts with CHGA. Interacts with secretogranin II/SCG2. Interacts (via C-terminus) with CPE. In terms of tissue distribution, expressed in various brain areas, with highest levels in the arcuate nucleus and the lateral hypothalamic area, as well as the paraventricular nucleus and the ventromedial hypothalamus (at protein level).

Its subcellular location is the cytoplasmic vesicle. The protein localises to the secretory vesicle. The protein resides in the secretory vesicle membrane. It localises to the secreted. Member of the granin protein family that regulates the biogenesis of secretory granules. Acts as a sorting receptor for intragranular proteins including chromogranin A/CHGA. May also play a role in angiogenesis. Promotes endothelial proliferation, migration and tube formation through MEK/ERK signaling pathway. The polypeptide is Secretogranin-3 (Scg3) (Mus musculus (Mouse)).